Reading from the N-terminus, the 212-residue chain is ATP-dependent Clp protease proteolytic subunit (212 aa).

The active-site Nucleophile is serine 114. Histidine 139 is an active-site residue.

This sequence belongs to the peptidase S14 family. In terms of assembly, fourteen ClpP subunits assemble into 2 heptameric rings which stack back to back to give a disk-like structure with a central cavity, resembling the structure of eukaryotic proteasomes.

Its subcellular location is the cytoplasm. The catalysed reaction is Hydrolysis of proteins to small peptides in the presence of ATP and magnesium. alpha-casein is the usual test substrate. In the absence of ATP, only oligopeptides shorter than five residues are hydrolyzed (such as succinyl-Leu-Tyr-|-NHMec, and Leu-Tyr-Leu-|-Tyr-Trp, in which cleavage of the -Tyr-|-Leu- and -Tyr-|-Trp bonds also occurs).. Its function is as follows. Cleaves peptides in various proteins in a process that requires ATP hydrolysis. Has a chymotrypsin-like activity. Plays a major role in the degradation of misfolded proteins. The chain is ATP-dependent Clp protease proteolytic subunit from Laribacter hongkongensis (strain HLHK9).